The following is a 112-amino-acid chain: Cortistatin (112 aa).

The signal sequence occupies residues 1–27 (MGGCSTRGKRPSALSLLLLLLLSGIAA). Residues 28–81 (SALPLESGPTGQDSVQDATGGRRTGLLTFLAWWHEWASQDSSSTAFEGGTPELS) constitute a propeptide that is removed on maturation. The disordered stretch occupies residues 66–101 (QDSSSTAFEGGTPELSKRQERPPLQQPPHRDKKPCK). Cys-100 and Cys-111 are joined by a disulfide.

This sequence belongs to the somatostatin family. As to expression, interneurons in the cerebral cortex and hippocampus.

Its subcellular location is the secreted. In terms of biological role, neuropeptide with neuronal depressant and sleep-modulating properties. This is Cortistatin (Cort) from Rattus norvegicus (Rat).